The primary structure comprises 180 residues: NAD(P)H-quinone oxidoreductase subunit I, chloroplastic (180 aa).

4Fe-4S ferredoxin-type domains follow at residues 55–84 (GRIHFEFDKCIACEVCVRVCPIDLPVVDWR) and 95–124 (LNYSIDFGVCIFCGNCVEYCPTSCLSMTEE). Residues Cys-64, Cys-67, Cys-70, Cys-74, Cys-104, Cys-107, Cys-110, and Cys-114 each coordinate [4Fe-4S] cluster.

The protein belongs to the complex I 23 kDa subunit family. As to quaternary structure, NDH is composed of at least 16 different subunits, 5 of which are encoded in the nucleus. Requires [4Fe-4S] cluster as cofactor.

The protein resides in the plastid. It is found in the chloroplast thylakoid membrane. It carries out the reaction a plastoquinone + NADH + (n+1) H(+)(in) = a plastoquinol + NAD(+) + n H(+)(out). The catalysed reaction is a plastoquinone + NADPH + (n+1) H(+)(in) = a plastoquinol + NADP(+) + n H(+)(out). Functionally, NDH shuttles electrons from NAD(P)H:plastoquinone, via FMN and iron-sulfur (Fe-S) centers, to quinones in the photosynthetic chain and possibly in a chloroplast respiratory chain. The immediate electron acceptor for the enzyme in this species is believed to be plastoquinone. Couples the redox reaction to proton translocation, and thus conserves the redox energy in a proton gradient. In Hordeum vulgare (Barley), this protein is NAD(P)H-quinone oxidoreductase subunit I, chloroplastic.